Reading from the N-terminus, the 200-residue chain is Large ribosomal subunit protein uL4 (200 aa).

A disordered region spans residues 42–65 (TRAQKTRSEVSGGGAKPWRQKGTG).

Belongs to the universal ribosomal protein uL4 family. As to quaternary structure, part of the 50S ribosomal subunit.

Functionally, one of the primary rRNA binding proteins, this protein initially binds near the 5'-end of the 23S rRNA. It is important during the early stages of 50S assembly. It makes multiple contacts with different domains of the 23S rRNA in the assembled 50S subunit and ribosome. In terms of biological role, forms part of the polypeptide exit tunnel. This Vibrio vulnificus (strain CMCP6) protein is Large ribosomal subunit protein uL4.